The chain runs to 297 residues: MSPKDLTIPTGEDGEGSVQVHLDESDKITGAKVFAVYGKGGIGKSTTSSNLSAAFSILGKRVLQIGCDPKHDSTFTLTGSLVPTVIDVLKDVDFHPEELRPEDFVFEGFNGVMCVEAGGPPAGTGCGGYVVGQTVKLLKQHHLLDDTDVVIFDVLGDVVCGGFAAPLQHADQAVVVTANDFDSIYAMNRIIAAVQAKSKNYKVRLAGCVANRSRATDEVDRFCEASDFRRLAHMPDLDAIRRSRLKKKTLFAMDEDPDVLVARAEYLRLAQSLWDGLPPMSPHSLPDREIFELLGFD.

ATP is bound by residues 41–46 (GIGKST) and K70. S45 serves as a coordination point for Mg(2+). [4Fe-4S] cluster-binding residues include C126 and C160. Residues 211–212 (NR) and 235–237 (PDL) contribute to the ATP site.

It belongs to the NifH/BchL/ChlL family. In terms of assembly, homodimer. Protochlorophyllide reductase is composed of three subunits; BchL, BchN and BchB. The cofactor is [4Fe-4S] cluster.

It catalyses the reaction chlorophyllide a + oxidized 2[4Fe-4S]-[ferredoxin] + 2 ADP + 2 phosphate = protochlorophyllide a + reduced 2[4Fe-4S]-[ferredoxin] + 2 ATP + 2 H2O. The protein operates within porphyrin-containing compound metabolism; bacteriochlorophyll biosynthesis (light-independent). In terms of biological role, component of the dark-operative protochlorophyllide reductase (DPOR) that uses Mg-ATP and reduced ferredoxin to reduce ring D of protochlorophyllide (Pchlide) to form chlorophyllide a (Chlide). This reaction is light-independent. The L component serves as a unique electron donor to the NB-component of the complex, and binds Mg-ATP. The sequence is that of Light-independent protochlorophyllide reductase iron-sulfur ATP-binding protein from Cereibacter sphaeroides (strain ATCC 17025 / ATH 2.4.3) (Rhodobacter sphaeroides).